Here is a 427-residue protein sequence, read N- to C-terminus: Lipophilic envelope-spanning tunnel protein A (427 aa).

The Cytoplasmic segment spans residues 1 to 75; it reads MALNTPQITP…LTRLAAMAFT (75 aa). A helical transmembrane segment spans residues 76-96; sequence MLLLMPFAWGEPLLHIWLLGI. The Periplasmic portion of the chain corresponds to 97 to 120; sequence RIDANVMQGIWQMTKQGDAITGSM. The chain crosses the membrane as a helical span at residues 121-141; that stretch reads VFFCVIGAPLILVTSIAYLWF. Topologically, residues 142 to 269 are cytoplasmic; the sequence is GNRLGMNLRP…RHSLQKCWAA (128 aa). A helical transmembrane segment spans residues 270-290; that stretch reads LLASIVLLLPANLLPISIIYL. Residues 291 to 310 are Periplasmic-facing; the sequence is NGGRQEDTILSGIMSLASSN. The chain crosses the membrane as a helical span at residues 311 to 331; that stretch reads IAVAGIVFIASILVPFTKVIV. The Cytoplasmic portion of the chain corresponds to 332 to 350; sequence MFTLLLSIHFKCQQGLRTR. Residues 351–371 form a helical membrane-spanning segment; that stretch reads ILLLRMVTWIGRWSMLDLFVI. Residues 372 to 382 are Periplasmic-facing; it reads SLTMSLINRDQ. Residues 383-403 traverse the membrane as a helical segment; it reads ILAFTMGPAAFYFGAAVILTI. Over 404–427 the chain is Cytoplasmic; sequence LAVEWLDSRLLWDAHESGNARFDD.

It belongs to the PqiA family. In terms of assembly, may interact with LetB in the inner membrane.

It is found in the cell inner membrane. Functionally, could be part, together with LetB, of a system that transports lipids between the inner membrane and the outer membrane. Contributes to membrane integrity. The chain is Lipophilic envelope-spanning tunnel protein A from Escherichia coli (strain K12).